Here is a 580-residue protein sequence, read N- to C-terminus: Anaphase-promoting complex subunit 7 (580 aa).

10 TPR repeats span residues 50–83 (IISF…LFKV), 107–140 (YELK…SRGL), 141–175 (DTHL…CPLC), 253–286 (VLEK…DPYY), 321–354 (AETW…KESH), 356–388 (FAHS…SKNI), 390–421 (TARE…SPDY), 422–456 (SKTM…SPHC), 458–490 (DTVL…QETD), and 491–523 (LMHT…NPQY). The disordered stretch occupies residues 539–580 (GIDPDQELDQENDDDDQEEGEGENDQEENDDDDNDDDDEYIS). Positions 542–580 (PDQELDQENDDDDQEEGEGENDQEENDDDDNDDDDEYIS) are enriched in acidic residues.

The protein belongs to the APC7 family. As to quaternary structure, the APC/C is composed of at least 13 subunits that stay tightly associated throughout the cell cycle: anapc1, anapc2, anapc3, anapc4, anapc5, anapc6, anapc7, anapc8, anapc10, anapc11, cdc20, cdc26 and cdh1.

It is found in the nucleus. The protein operates within protein modification; protein ubiquitination. Its function is as follows. Component of the anaphase promoting complex/cyclosome (APC/C), a cell cycle-regulated E3 ubiquitin-protein ligase complex that controls progression through mitosis and the G1 phase of the cell cycle. The sequence is that of Anaphase-promoting complex subunit 7 (anapc7) from Dictyostelium discoideum (Social amoeba).